The sequence spans 281 residues: MEKAIRDRVEKWKKEHTIDGKDATNEHAYESLNELILDGKKLTSIKNEEKELLKNFKNLERLCLNQTGIQTLENIPSIATLNVLELTDNHLSSVEVLKYIVQNFPNIKTLEIGGNHFKNINDFETLKELKNLVRLGVQFNPFADNPNYRKELFEFLPNVKIIDCYNKEGMEVLSSDEEEEEEYEEDNTLKNFYEADFKDEDDEDEEFVPNDNEDDDEDDELDDDLEDEDMEDLDKEDLDKEDYDIDTKETEGVNKDEKSNKRKQDALDNTNDMDLKKTKLE.

LRR repeat units lie at residues 29–52 (YESL…EKEL), 56–78 (FKNL…IPSI), 79–103 (ATLN…IVQN), and 105–128 (PNIK…TLKE). Residues 140–178 (NPFADNPNYRKELFEFLPNVKIIDCYNKEGMEVLSSDEE) form the LRRCT domain. Over residues 197 to 244 (FKDEDDEDEEFVPNDNEDDDEDDELDDDLEDEDMEDLDKEDLDKEDYD) the composition is skewed to acidic residues. Positions 197–281 (FKDEDDEDEE…DMDLKKTKLE (85 aa)) are disordered. Over residues 245–266 (IDTKETEGVNKDEKSNKRKQDA) the composition is skewed to basic and acidic residues.

The protein belongs to the ANP32 family.

The polypeptide is Acidic leucine-rich nuclear phosphoprotein 32-related protein (Plasmodium falciparum (isolate 3D7)).